Consider the following 162-residue polypeptide: NADPH-dependent 7-cyano-7-deazaguanine reductase (162 aa).

The active-site Thioimide intermediate is cysteine 53. The active-site Proton donor is the aspartate 60. Residues 75–77 and 94–95 contribute to the substrate site; these read VES and HE.

The protein belongs to the GTP cyclohydrolase I family. QueF type 1 subfamily.

It is found in the cytoplasm. It catalyses the reaction 7-aminomethyl-7-carbaguanine + 2 NADP(+) = 7-cyano-7-deazaguanine + 2 NADPH + 3 H(+). Its pathway is tRNA modification; tRNA-queuosine biosynthesis. Catalyzes the NADPH-dependent reduction of 7-cyano-7-deazaguanine (preQ0) to 7-aminomethyl-7-deazaguanine (preQ1). This is NADPH-dependent 7-cyano-7-deazaguanine reductase from Exiguobacterium sibiricum (strain DSM 17290 / CCUG 55495 / CIP 109462 / JCM 13490 / 255-15).